The chain runs to 44 residues: Photosystem I reaction center subunit IX (44 aa).

A helical membrane pass occupies residues 7 to 27 (YLSTAPVLAISWLIFVAGLLI).

It belongs to the PsaJ family.

The protein resides in the plastid. It is found in the chloroplast thylakoid membrane. Functionally, may help in the organization of the PsaE and PsaF subunits. In Larix decidua (European larch), this protein is Photosystem I reaction center subunit IX.